Consider the following 629-residue polypeptide: tRNA uridine 5-carboxymethylaminomethyl modification enzyme MnmG (629 aa).

FAD-binding positions include 14-19, Val126, and Ser181; that span reads GAGHAG. Residue 273 to 287 coordinates NAD(+); that stretch reads GPRYCPSIEDKVVRF. Gln370 provides a ligand contact to FAD.

The protein belongs to the MnmG family. Homodimer. Heterotetramer of two MnmE and two MnmG subunits. It depends on FAD as a cofactor.

Its subcellular location is the cytoplasm. Functionally, NAD-binding protein involved in the addition of a carboxymethylaminomethyl (cmnm) group at the wobble position (U34) of certain tRNAs, forming tRNA-cmnm(5)s(2)U34. This is tRNA uridine 5-carboxymethylaminomethyl modification enzyme MnmG from Bacillus cereus (strain ZK / E33L).